The primary structure comprises 2272 residues: COPII coat assembly protein SEC16 (2272 aa).

Over residues 1–20 (MSTEAKRRRNQKKKQKQKQK) the composition is skewed to basic residues. 11 disordered regions span residues 1–99 (MSTE…SPYV), 124–401 (AVDV…HTPE), 430–630 (VSSQ…HNLS), 646–714 (QQFL…EKKK), 727–785 (SKPK…NPYQ), 832–852 (EGAA…LGAY), 1488–1624 (LNHG…PKRA), 1694–1737 (QDRR…YRKT), 1750–1990 (SLAP…EHAV), 2043–2125 (RASS…KPIK), and 2146–2187 (KDAT…VGGP). Residues 151–170 (ATPAEPSAAPVAPEAAASEE) are compositionally biased toward low complexity. Composition is skewed to basic and acidic residues over residues 215-237 (PEQR…ERTQ) and 318-339 (EENR…RDQD). Over residues 481 to 496 (AQNTNPNVDTSQQLPV) the composition is skewed to polar residues. A compositionally biased stretch (low complexity) spans 497–509 (SRSSAELSSSQAA). A compositionally biased stretch (acidic residues) spans 559–598 (DNDDDLLNDDEEEEANAGDQPENDQENCDDDSFLDSDEEP). Polar residues predominate over residues 608–621 (TTYTPSTQVLGQDR). Positions 703–714 (ESVRRLEEEKKK) are enriched in basic and acidic residues. Residues 748-758 (QPASRSFSPSD) show a composition bias toward polar residues. 3 stretches are compositionally biased toward polar residues: residues 1526-1554 (PGSN…NLHG), 1582-1609 (PQNS…SIPS), and 1699-1719 (SAYS…SNIS). Low complexity predominate over residues 1750-1761 (SLAPSSVSLSQS). Residues 1798-1815 (SVDTSEYSFPDESVQSWE) are compositionally biased toward polar residues. The segment covering 1972–1990 (EEGRTDNQTKAVEKQEHAV) has biased composition (basic and acidic residues). Acidic residues predominate over residues 2061-2076 (YYDDVVEDESDDSEEE). Composition is skewed to basic and acidic residues over residues 2077–2103 (SERK…RKNE), 2114–2123 (LKKDTNEKKP), and 2146–2155 (KDATEEEKQK).

It belongs to the SEC16 family.

Its subcellular location is the endoplasmic reticulum membrane. Involved in the initiation of assembly of the COPII coat required for the formation of transport vesicles from the endoplasmic reticulum (ER) and the selection of cargo molecules. Also involved in autophagy. In Eremothecium gossypii (strain ATCC 10895 / CBS 109.51 / FGSC 9923 / NRRL Y-1056) (Yeast), this protein is COPII coat assembly protein SEC16 (SEC16).